A 245-amino-acid polypeptide reads, in one-letter code: DNA polymerase sliding clamp (245 aa).

This sequence belongs to the PCNA family. Homotrimer. The subunits circularize to form a toroid; DNA passes through its center. Replication factor C (RFC) is required to load the toroid on the DNA.

In terms of biological role, sliding clamp subunit that acts as a moving platform for DNA processing. Responsible for tethering the catalytic subunit of DNA polymerase and other proteins to DNA during high-speed replication. In Methanosarcina acetivorans (strain ATCC 35395 / DSM 2834 / JCM 12185 / C2A), this protein is DNA polymerase sliding clamp.